The primary structure comprises 285 residues: Dihydropteroate synthase (285 aa).

Positions T25–K271 constitute a Pterin-binding domain. Mg(2+) is bound at residue N32. (7,8-dihydropterin-6-yl)methyl diphosphate contacts are provided by residues T72, D106, N125, D189, K225, and R259–H261.

It belongs to the DHPS family. It depends on Mg(2+) as a cofactor.

The enzyme catalyses (7,8-dihydropterin-6-yl)methyl diphosphate + 4-aminobenzoate = 7,8-dihydropteroate + diphosphate. It functions in the pathway cofactor biosynthesis; tetrahydrofolate biosynthesis; 7,8-dihydrofolate from 2-amino-4-hydroxy-6-hydroxymethyl-7,8-dihydropteridine diphosphate and 4-aminobenzoate: step 1/2. Its function is as follows. Catalyzes the condensation of para-aminobenzoate (pABA) with 6-hydroxymethyl-7,8-dihydropterin diphosphate (DHPt-PP) to form 7,8-dihydropteroate (H2Pte), the immediate precursor of folate derivatives. In Bacillus subtilis (strain 168), this protein is Dihydropteroate synthase (sul).